A 501-amino-acid chain; its full sequence is Envelope glycoprotein C homolog (501 aa).

The N-terminal stretch at 1–27 (MLTPRVLRALGWTGLFFLLLSPSNVLG) is a signal peptide. At 28–465 (ASLSRDLETP…DATPSARGTP (438 aa)) the chain is on the virion surface side. Asparagine 46 carries an N-linked (GlcNAc...) asparagine; by host glycan. A disordered region spans residues 53–87 (PLTEVPHAPSTESVSTNSESTNEHTITETTGKNAY). Residues 62–72 (STESVSTNSES) show a composition bias toward low complexity. N-linked (GlcNAc...) asparagine; by host glycosylation is found at asparagine 91, asparagine 100, asparagine 120, asparagine 212, asparagine 354, asparagine 400, and asparagine 429. Residues 258-356 (PASVDVLAPP…GDMISTTNAT (99 aa)) enclose the Ig-like domain. A helical membrane pass occupies residues 466 to 492 (MVITVTAVLGLAVILGMGIIMTALCLY). The Cytoplasmic segment spans residues 493 to 501 (NSTRKNIRL).

The protein belongs to the herpesviridae glycoprotein C family.

The protein resides in the secreted. It localises to the host cell membrane. In terms of biological role, may play an immunoevasive role in the pathogenesis of Marek's disease. It is a candidate for causing the early-stage immunosuppression that occurs after MDHV infection. The chain is Envelope glycoprotein C homolog (gC) from Gallus gallus (Chicken).